The chain runs to 104 residues: Thioredoxin (104 aa).

The region spanning Ala2–Leu104 is the Thioredoxin domain. Residues Cys29 and Cys32 are joined by a disulfide bond.

This sequence belongs to the thioredoxin family.

Functionally, component of the thioredoxin-thioredoxin reductase system. Participates in various redox reactions through the reversible oxidation of its active center dithiol to a disulfide and catalyzes dithiol-disulfide exchange reactions. This Staphylococcus epidermidis (strain ATCC 35984 / DSM 28319 / BCRC 17069 / CCUG 31568 / BM 3577 / RP62A) protein is Thioredoxin (trxA).